The chain runs to 596 residues: Arrestin domain-containing protein C31A2.12 (596 aa).

Residues Ala194–Leu211 traverse the membrane as a helical segment. Disordered stretches follow at residues Asn363–Ser387 and Gln405–Arg446. Phosphothreonine is present on residues Thr373 and Thr374. Polar residues-rich tracts occupy residues Gln405–Asn420 and Ser430–Arg446. Residues Ser452, Ser474, Ser493, and Ser497 each carry the phosphoserine modification. Residues Ser493–Asn596 are disordered. Residues Thr502 and Thr507 each carry the phosphothreonine modification. Positions Pro504–Ser522 are enriched in polar residues. Phosphoserine is present on Ser514. Residues His531–Ser555 are compositionally biased toward low complexity.

This sequence belongs to the arrestin family.

The protein resides in the membrane. In Schizosaccharomyces pombe (strain 972 / ATCC 24843) (Fission yeast), this protein is Arrestin domain-containing protein C31A2.12.